The following is a 1765-amino-acid chain: Tight junction protein ZO-1 (1765 aa).

In terms of domain architecture, PDZ 1 spans 23–110 (TVTLHRAPGF…NAKITIRRKK (88 aa)). Over residues 102–112 (AKITIRRKKKV) the composition is skewed to basic residues. Residues 102–189 (AKITIRRKKK…QPAKPTKVTL (88 aa)) form a disordered region. Residues 123–136 (PVSDNEDDSYDEDV) are compositionally biased toward acidic residues. S125 carries the post-translational modification Phosphoserine. Y132 is subject to Phosphotyrosine. Positions 149-175 (RRGEKSWARDRSASRDRSLSPRSDRRS) are enriched in basic and acidic residues. S175, S178, and S179 each carry phosphoserine. T185 carries the post-translational modification Phosphothreonine. One can recognise a PDZ 2 domain in the interval 186 to 264 (KVTLVKSRKN…KLKMVVQRDE (79 aa)). Phosphoserine is present on residues S212 and S241. T267 carries the phosphothreonine modification. A phosphoserine mark is found at S275, S277, S280, S284, S290, S294, S297, S300, S323, S329, S334, S337, and S353. Residues 296 to 363 (ASDHSVRSHD…TPVKHVDDHT (68 aa)) form a disordered region. Positions 299-308 (HSVRSHDRPP) are enriched in basic and acidic residues. Residues 325–338 (HSTQSPQQPSNGSL) are compositionally biased toward polar residues. T354 carries the phosphothreonine modification. In terms of domain architecture, PDZ 3 spans 421-502 (SMKLVKFRKG…GEEVTILAQK (82 aa)). The SH3 domain maps to 516–584 (GDSFYIRTHF…PNKNRAEQLA (69 aa)). Phosphoserine occurs at positions 617 and 622. The tract at residues 633–876 (YERVVLREAG…GTPPESAITR (244 aa)) is occludin (OCLN)-binding region. Positions 690-791 (RLHTIKQIID…WYGALKEAIQ (102 aa)) constitute a Guanylate kinase-like domain. T809 bears the Phosphothreonine mark. 2 positions are modified to phosphoserine: S810 and S821. Phosphotyrosine is present on Y822. 3 positions are modified to phosphoserine: S824, S828, and S837. 2 disordered regions span residues 825-941 (APGS…PASS) and 1023-1042 (ALGH…YDPQ). Residues T846, T848, T854, T861, and T868 each carry the phosphothreonine modification. The segment covering 879 to 892 (EPVREDSSGMHHEN) has biased composition (basic and acidic residues). Low complexity predominate over residues 893-906 (QTYPPYSPQAQPQA). Residue S912 is modified to Phosphoserine. Residue S1071 is modified to Phosphoserine. The interval 1092–1585 (SYYDDKQPYP…SSTQPPEFDS (494 aa)) is disordered. Residues 1106-1124 (DTQHPRDLDSRQHPEEASE) show a composition bias toward basic and acidic residues. A phosphotyrosine mark is found at Y1139 and Y1164. Residues 1150 to 1370 (RTSTLRHEEQ…FDRRSFESKP (221 aa)) form an actin-binding region (ABR) region. 2 stretches are compositionally biased toward basic and acidic residues: residues 1268 to 1285 (KMFE…KDVN) and 1335 to 1346 (PPEDIVRSNHYD). Y1353 carries the post-translational modification Phosphotyrosine. At S1365 the chain carries Phosphoserine. Residues 1388 to 1399 (SQSQPNFSSYSS) show a composition bias toward low complexity. The segment covering 1401-1418 (GKPETDAMDRSFSEKRYD) has biased composition (basic and acidic residues). S1411 is subject to Phosphoserine. 2 stretches are compositionally biased toward polar residues: residues 1442–1468 (NSSL…NSYI) and 1509–1519 (GAEQTQKTITP). Positions 1535–1544 (PFERKFESPK) are enriched in basic and acidic residues. Phosphoserine occurs at positions 1542 and 1614. Residues 1631–1765 (ATARGIFNSN…NCVSVLIDHF (135 aa)) form the ZU5 domain.

The protein belongs to the MAGUK family. In terms of assembly, homodimer. Forms heterodimers TJP3. Forms a heterodimer (via PDZ2 domain) with TJP2/ZO2 (via PDZ2 domain). Interacts with OCLN. Interacts with CALM, claudins, CGN/cingulin, CXADR, GJA12, GJD3 and UBN1. Interacts (via ZU5 domain) with CDC42BPB and MYZAP. Interacts (via PDZ domain) with GJA1. Interacts (via PDZ domains) with ANKRD2. Interacts with BVES (via the C-terminus cytoplasmic tail). Interacts with HSPA4. Interacts with KIRREL1. Interacts with DLL1. Interacts with USP53 (via the C-terminal region). Interacts with DNMBP (via C-terminal domain); required for the apical cell-cell junction localization of DNMBP. Interacts with SPEF1. Interacts (via N-terminus) with CTNNA1. Interacts with CLDN18. Interacts with CLDN16 (via TRV motif); this is a prerequisite for anchoring of CLDN16 at the tight junction. Interacts with PKP1; the interaction facilitates TJP1/ZO-1 localization to the plasma membrane. Phosphorylated at tyrosine redidues in response to epidermal growth factor (EGF). This response is dependent on an intact actin microfilament system. Dephosphorylated by Ptprj.

Its subcellular location is the cell membrane. It localises to the cell junction. The protein resides in the tight junction. The protein localises to the gap junction. Its function is as follows. TjpP1, Tjp2, and Tjp3 are closely related scaffolding proteins that link tight junction (TJ) transmembrane proteins such as claudins, junctional adhesion molecules, and occludin to the actin cytoskeleton. The tight junction acts to limit movement of substances through the paracellular space and as a boundary between the compositionally distinct apical and basolateral plasma membrane domains of epithelial and endothelial cells. Necessary for lumenogenesis, and particularly efficient epithelial polarization and barrier formation. Plays a role in the regulation of cell migration by targeting Cdc42bpb to the leading edge of migrating cells. Plays an important role in podosome formation and associated function, thus regulating cell adhesion and matrix remodeling. With Tjp2 and Tjp3, participates in the junctional retention and stability of the transcription factor Dbpa, but is not involved in its shuttling to the nucleus. May play a role in mediating cell morphology changes during ameloblast differentiation via its role in tight junctions. The sequence is that of Tight junction protein ZO-1 from Rattus norvegicus (Rat).